Consider the following 382-residue polypeptide: MLAVHFGAGNIGRGFIGSLLSQSGYEVVFVDINDELVRLLKEKQEYRVIIADENRQELLIRNVSAVNSQTEREKVIDYITKAHLITTAVGPHILPAIATILAEGLQKRITINKTPLHIIACENMIGGSDVLKSHVFEKISEADKPLFEKYYGFLNCAVDRIVPNQKHDDPLSVVVEPFFEWVIEKRNIIGAIPPIQGAHFVDDLKPYIERKLFTVNTGHAIASYLGYYKKLQTIQEAMCDQEIRSDVEKALHESGAVLVKKYGWNENEHQSYIQKIIQRFINPSISDEVVRVARSPIRKLGANDRLIGPATQYYDLFGQVPHGLVKGIAALLLFDYENDEEAVALQKTIQETGVEGALYQYSQLEKDHPLVIAIKDQWQHLK.

Ala3–Gly14 contacts NAD(+).

The protein belongs to the mannitol dehydrogenase family.

It catalyses the reaction D-mannitol 1-phosphate + NAD(+) = beta-D-fructose 6-phosphate + NADH + H(+). The chain is Mannitol-1-phosphate 5-dehydrogenase (mtlD) from Geobacillus stearothermophilus (Bacillus stearothermophilus).